The sequence spans 371 residues: S-adenosylmethionine:tRNA ribosyltransferase-isomerase (371 aa).

It belongs to the QueA family. In terms of assembly, monomer.

The protein localises to the cytoplasm. The catalysed reaction is 7-aminomethyl-7-carbaguanosine(34) in tRNA + S-adenosyl-L-methionine = epoxyqueuosine(34) in tRNA + adenine + L-methionine + 2 H(+). It participates in tRNA modification; tRNA-queuosine biosynthesis. Functionally, transfers and isomerizes the ribose moiety from AdoMet to the 7-aminomethyl group of 7-deazaguanine (preQ1-tRNA) to give epoxyqueuosine (oQ-tRNA). In Prochlorococcus marinus (strain MIT 9313), this protein is S-adenosylmethionine:tRNA ribosyltransferase-isomerase.